We begin with the raw amino-acid sequence, 287 residues long: Aquaporin PIP1-2 (287 aa).

Residues 1 to 37 (MEGKEEDVRLGANKFTERQPIGTAAQSQDKDYKEPPP) form a disordered region. Residues 1 to 55 (MEGKEEDVRLGANKFTERQPIGTAAQSQDKDYKEPPPAPLFEPGELSSWSFYRAG) lie on the Cytoplasmic side of the membrane. Residues 56-76 (IAEFVATFLFLYITILTVMGV) form a helical membrane-spanning segment. The Extracellular portion of the chain corresponds to 77–89 (VKSSTKCSTVGIQ). A helical membrane pass occupies residues 90–110 (GIAWAFGGMIFALVYCTAGIS). At 111-133 (GGHINPAVTFGLFLARKLSLTRA) the chain is on the cytoplasmic side. The short motif at 115 to 117 (NPA) is the NPA 1 element. The chain crosses the membrane as a helical span at residues 134–154 (LFYMVMQCLGAICGAGVVKGF). The Extracellular segment spans residues 155 to 175 (QKGLYENNGGGANVVAPGYTK). Residues 176–196 (GDGLGAEIVGTFILVYTVFSA) traverse the membrane as a helical segment. Topologically, residues 197–209 (TDAKRSARDSHVP) are cytoplasmic. Residues 210–230 (ILAPLPIGFAVFLVHLATIPI) traverse the membrane as a helical segment. Residues 231 to 257 (TGTGINPARSLGAAIIYNKGHAWDDHW) lie on the Extracellular side of the membrane. The NPA 2 motif lies at 236–238 (NPA). Residues 258 to 278 (IFWVGPFIGAALAALYHQVVI) form a helical membrane-spanning segment. The Cytoplasmic segment spans residues 279–287 (RAIPFKSRS).

It belongs to the MIP/aquaporin (TC 1.A.8) family. PIP (TC 1.A.8.11) subfamily. As to expression, barely detectable in roots, leaves and fruits.

It localises to the cell membrane. Functionally, water channel required to facilitate the transport of water across cell membrane; mercury-insensitive. Contributes to the tolerance to multiple abiotic stresses including salt (NaCl), cold and water deprivation, by modulating cytosolic K(+)/Na(+) ratio, maintaining osmotic balance, and reducing membrane injury (e.g. oxidative injury). This is Aquaporin PIP1-2 from Musa acuminata subsp. malaccensis (Wild banana).